The primary structure comprises 119 residues: Large ribosomal subunit protein bL19 (119 aa).

Belongs to the bacterial ribosomal protein bL19 family.

Its function is as follows. This protein is located at the 30S-50S ribosomal subunit interface and may play a role in the structure and function of the aminoacyl-tRNA binding site. In Saccharopolyspora erythraea (strain ATCC 11635 / DSM 40517 / JCM 4748 / NBRC 13426 / NCIMB 8594 / NRRL 2338), this protein is Large ribosomal subunit protein bL19.